The chain runs to 652 residues: Acetyl-coenzyme A synthetase (652 aa).

CoA is bound by residues 193-196 (RRGK) and Thr-312. ATP is bound by residues 388-390 (GEP), 412-417 (DTWWQT), Asp-501, and Arg-516. Ser-524 lines the CoA pocket. 3 residues coordinate Mg(2+): Val-538, His-540, and Val-543. Position 611 is an N6-acetyllysine (Lys-611).

Belongs to the ATP-dependent AMP-binding enzyme family. The cofactor is Mg(2+). Acetylated. Deacetylation by the SIR2-homolog deacetylase activates the enzyme.

It carries out the reaction acetate + ATP + CoA = acetyl-CoA + AMP + diphosphate. In terms of biological role, catalyzes the conversion of acetate into acetyl-CoA (AcCoA), an essential intermediate at the junction of anabolic and catabolic pathways. AcsA undergoes a two-step reaction. In the first half reaction, AcsA combines acetate with ATP to form acetyl-adenylate (AcAMP) intermediate. In the second half reaction, it can then transfer the acetyl group from AcAMP to the sulfhydryl group of CoA, forming the product AcCoA. This is Acetyl-coenzyme A synthetase from Streptomyces avermitilis (strain ATCC 31267 / DSM 46492 / JCM 5070 / NBRC 14893 / NCIMB 12804 / NRRL 8165 / MA-4680).